The chain runs to 141 residues: Hemoglobin subunit alpha-1/2 (141 aa).

The Globin domain maps to 1 to 141 (VLSAABKSBV…VSTVLTSKYR (141 aa)). S3 carries the phosphoserine modification. An N6-succinyllysine mark is found at K7 and K11. K16 bears the N6-acetyllysine; alternate mark. Residue K16 is modified to N6-succinyllysine; alternate. Y24 bears the Phosphotyrosine mark. Phosphoserine is present on S35. K40 is modified (N6-succinyllysine). At S49 the chain carries Phosphoserine. O2 is bound at residue H58. Residue H87 participates in heme b binding. S102 carries the phosphoserine modification. T108 is modified (phosphothreonine). The residue at position 124 (S124) is a Phosphoserine. T134 and T137 each carry phosphothreonine. A Phosphoserine modification is found at S138.

The protein belongs to the globin family. Heterotetramer of two alpha chains and two beta chains. Red blood cells.

Its function is as follows. Involved in oxygen transport from the lung to the various peripheral tissues. This Odocoileus virginianus virginianus (Virginia white-tailed deer) protein is Hemoglobin subunit alpha-1/2.